Here is a 238-residue protein sequence, read N- to C-terminus: 3-deoxy-D-manno-octulosonic acid kinase (238 aa).

Asp167 is an active-site residue.

Belongs to the protein kinase superfamily. KdkA/RfaP family.

The protein localises to the cell inner membrane. The catalysed reaction is an alpha-Kdo-(2-&gt;6)-lipid IVA + ATP = a 4-O-phospho-alpha-Kdo-(2-&gt;6)-lipid IVA + ADP + H(+). It participates in bacterial outer membrane biogenesis; LPS core biosynthesis. Its function is as follows. Catalyzes the ATP-dependent phosphorylation of the 3-deoxy-D-manno-octulosonic acid (Kdo) residue in Kdo-lipid IV(A) at the 4-OH position. The polypeptide is 3-deoxy-D-manno-octulosonic acid kinase (Vibrio parahaemolyticus serotype O3:K6 (strain RIMD 2210633)).